The sequence spans 352 residues: Protein RecA (352 aa).

68-75 (GPESSGKT) contacts ATP.

It belongs to the RecA family.

It localises to the cytoplasm. Its function is as follows. Can catalyze the hydrolysis of ATP in the presence of single-stranded DNA, the ATP-dependent uptake of single-stranded DNA by duplex DNA, and the ATP-dependent hybridization of homologous single-stranded DNAs. It interacts with LexA causing its activation and leading to its autocatalytic cleavage. This chain is Protein RecA, found in Clostridium perfringens (strain SM101 / Type A).